An 88-amino-acid polypeptide reads, in one-letter code: Protein A19 homolog (88 aa).

Residues 1 to 28 (MADSTAGAKKRKKRSTSATSTRKEPPTV) are disordered.

The protein belongs to the chordopoxvirinae A19 family.

This Fowlpox virus (strain NVSL) (FPV) protein is Protein A19 homolog.